A 614-amino-acid polypeptide reads, in one-letter code: Zinc metalloproteinase-disintegrin-like protein H4 subunit A (614 aa).

A signal peptide spans 1–20; the sequence is MIQPLLVVTCLVVFPYQVSS. A propeptide spanning residues 21 to 193 is cleaved from the precursor; sequence IILESGNVND…RKASQLVATS (173 aa). E194 bears the Pyrrolidone carboxylic acid (Glu) mark. A Peptidase M12B domain is found at 201-397; that stretch reads KYIELVIVVD…IKSKCIDNKP (197 aa). An N-linked (GlcNAc...) asparagine glycan is attached at N220. 17 disulfides stabilise this stretch: C312-C392, C352-C376, C354-C359, C408-C437, C419-C432, C421-C427, C431-C454, C445-C451, C450-C476, C463-C483, C470-C502, C495-C507, C514-C564, C529-C575, C542-C552, C559-C601, and C595-C607. H337 serves as a coordination point for Zn(2+). The Metal-binding signature appears at 337–348; the sequence is HELGHNLGMDHD. The Proton acceptor role is filled by E338. 2 residues coordinate Zn(2+): H341 and H347. The Disintegrin domain maps to 405–491; sequence PAFCGNYFVE…ECPTDVLQRN (87 aa). Ca(2+) contacts are provided by N410, F412, E414, E417, and D420. N-linked (GlcNAc...) asparagine glycosylation occurs at N433. Residues 469–471 carry the D/ECD-tripeptide motif; sequence ECD. Ca(2+)-binding residues include D471 and D486.

Belongs to the venom metalloproteinase (M12B) family. P-III subfamily. Homodimer; disulfide-linked. Heterodimer of A and B subunits; disulfide-linked. It depends on Zn(2+) as a cofactor. N-glycosylated. In terms of processing, the N-terminus is blocked. As to expression, expressed by the venom gland (at protein level). Expressed by the venom gland.

The protein localises to the secreted. Its activity is regulated as follows. The proteolytic activity of the heterodimer of A and B subunits requires Zn(2+) and Ca(2+) ions. Heterodimer (A and B subunits): Zinc metalloprotease that has fibrinogenolytic and hemorrhagic activities. Cleaves insulin B chain preferably at '40-Tyr-|-Leu-41' bond, but also at '28-Gln-|-His-29' and '34-His-|-Leu-35' bonds. Hydrolyzes effectively isolated extracellular matrix (ECM) bovine fibronectin, and only slightly, basal membrane (BM) proteins human collagen IV and murine laminin, in vitro. Cleaves nidogen-1 (at '350-Ser-|-Phe-351' and '380-Tyr-|-Asn-381' bonds), but not laminin, in a solubilized BM preparation. Hydrolyzes plasma proteins involved in blood coagulation in vitro. It slightly shortens prothrombin time and significantly prolongs thrombin time. Has potent alpha-fibrinogenase activity cleaving human fibrinogen alpha chain at '441-Glu-|-Leu-442' and '539-Glu-|-Phe-540' bonds, and to a lesser extent, beta chain at '52-Lys-|-Arg-53' and '48-Pro-|-Leu-49' bonds, but does not cleave gamma chain. Hydrolyzes bovine prothrombin at '200-Ser-|-Gly-201' bond, but does not activate it, however, it cleaves fragment 1 and prethrombin 1 from it. Hydrolyzes bovine factor X heavy chain, but the cleavage does not produce an activated factor Xa heavy chain. No hydrolysis or activation of plasminogen. The ability to degrade some of the ECM, BM and plasma proteins is likely the main contributor to its hemorrhagic activity. Inhibits platelet aggregation induced by collagen in vitro. Its binding to glycosaminoglycans (GAGs) may assist in concentrating it in the proximity of blood vessel walls enabling in vivo degradation of BM protein components. Cytotoxic to cultured HeLa cancer cells in a concentration- and time-dependent manner. In the solubilized BM preparation (Matrigel), it induces morphological changes in the HeLa cells and inhibits their adhesion, however, the viability of the cells is not reduced. The polypeptide is Zinc metalloproteinase-disintegrin-like protein H4 subunit A (Vipera ammodytes ammodytes (Western sand viper)).